Reading from the N-terminus, the 518-residue chain is Major facilitator superfamily multidrug transporter mfsC (518 aa).

7 helical membrane-spanning segments follow: residues 27 to 47 (VLLTTTVVNFLDLFQLSSVLF), 65 to 85 (WVLIVYNITFAAFLLIAGQLG), 88 to 108 (FGLEKIFIAGTATLTISNVIN), 123 to 143 (ISGVGAGLTAPNGLAILSNTF), 152 to 172 (ALAIYTACGPLGSTIGTVVGS), 183 to 203 (IFWLCLILTGLSTILACLFLP), and 212 to 232 (PIDIPGTVVFTAGVALLVYGL). The N-linked (GlcNAc...) asparagine glycan is linked to N233. A run of 7 helical transmembrane segments spans residues 242–262 (SAAMLTGIILGVCLLFVFLWV), 281–301 (FLVMLVAIFAFGGSFSTWFFI), 315–335 (ILTAVYFLPAAFAAIASGVFA), 347–367 (ILVAGLAITAAGAVAWAFAGP), 380–400 (TAIIFVIGSPVALVPTQSILL), 409–429 (AVAGALFNTAYQVGASVILAG), and 455–475 (AFWLIAGVLGAAALTVMVCYW).

The protein belongs to the major facilitator superfamily. EmrB family.

Its subcellular location is the membrane. Its function is as follows. Major facilitator superfamily transporter that may be involved in A.fumigatus adaptation to azoles such as vorizonazole. In Aspergillus fumigatus (strain ATCC MYA-4609 / CBS 101355 / FGSC A1100 / Af293) (Neosartorya fumigata), this protein is Major facilitator superfamily multidrug transporter mfsC.